The sequence spans 325 residues: Small ribosomal subunit protein uS4m (325 aa).

The S4 RNA-binding domain maps to 146–209; sequence KRIDMILLRS…HKQNLIHRLK (64 aa).

The protein belongs to the universal ribosomal protein uS4 family.

It is found in the mitochondrion. This is Small ribosomal subunit protein uS4m (mrps4) from Dictyostelium citrinum (Slime mold).